The sequence spans 335 residues: tRNA-dihydrouridine(20/20a) synthase (335 aa).

Residues 19-21 and Q72 contribute to the FMN site; that span reads PMM. Catalysis depends on C102, which acts as the Proton donor. Residues K141, H173, 213–215, and 235–236 contribute to the FMN site; these read NGG and GR.

Belongs to the Dus family. DusA subfamily. It depends on FMN as a cofactor.

The enzyme catalyses 5,6-dihydrouridine(20) in tRNA + NADP(+) = uridine(20) in tRNA + NADPH + H(+). It catalyses the reaction 5,6-dihydrouridine(20) in tRNA + NAD(+) = uridine(20) in tRNA + NADH + H(+). The catalysed reaction is 5,6-dihydrouridine(20a) in tRNA + NADP(+) = uridine(20a) in tRNA + NADPH + H(+). It carries out the reaction 5,6-dihydrouridine(20a) in tRNA + NAD(+) = uridine(20a) in tRNA + NADH + H(+). Catalyzes the synthesis of 5,6-dihydrouridine (D), a modified base found in the D-loop of most tRNAs, via the reduction of the C5-C6 double bond in target uridines. Specifically modifies U20 and U20a in tRNAs. This Xanthomonas campestris pv. campestris (strain ATCC 33913 / DSM 3586 / NCPPB 528 / LMG 568 / P 25) protein is tRNA-dihydrouridine(20/20a) synthase.